The following is a 466-amino-acid chain: 3-isopropylmalate dehydratase large subunit (466 aa).

[4Fe-4S] cluster contacts are provided by cysteine 347, cysteine 407, and cysteine 410.

This sequence belongs to the aconitase/IPM isomerase family. LeuC type 1 subfamily. Heterodimer of LeuC and LeuD. [4Fe-4S] cluster serves as cofactor.

It carries out the reaction (2R,3S)-3-isopropylmalate = (2S)-2-isopropylmalate. Its pathway is amino-acid biosynthesis; L-leucine biosynthesis; L-leucine from 3-methyl-2-oxobutanoate: step 2/4. Its function is as follows. Catalyzes the isomerization between 2-isopropylmalate and 3-isopropylmalate, via the formation of 2-isopropylmaleate. The sequence is that of 3-isopropylmalate dehydratase large subunit from Vibrio campbellii (strain ATCC BAA-1116).